A 5061-amino-acid chain; its full sequence is MTRKRKSGKKGKPLAQKKEAQKRGGSTSSSTTQKEGAQKGDGSSSSSTTQKDGAQKRDDSTSSSSTAQKEEGQKSDGSTSSSTTNKEGAQKRDGSTSSRLQKKGPQKRKGSTSSSRAHSRSRSKSKQTSYPSQARSRSHGQHNISTTESGPLSKEAQTQTSASLLVDKDTQTETVGQASQQTQTEINGNTETAEVSQPPQLSHEDVEMEGTVQPRTKGSESDGEKEESVKRKKRKLSEIGEPAKETEDSTKLSHECEEKVGDNQKNEDTNKHYGGDSLKDLKSVTEEPKSYAAAAATGKTGKVSKEQTNQIEANQDSTMESKSTQRKPSPVRAPAGPPMLTFYIYAVLDKRFRFNEQYDSLFLDYGNGNIKLQMKHFNIGKDGYLIEATFSVEDSAVRGGTIQYKYVVQQRQNQKSEIAVRYIEVPSYTTEKEFHLYEGYISCSSTVSITEWMMSLFHSEQKAVYKGWETSAHVLLDRIFLKWHPSNEESNMTFVQHLRSYKNAFESGFVEFPGNYTPFPIKVSELISAKLRMILKKESEALRTSESLDGVKSEALSVALSVFKVCCGCDVDLSLKDWGKLCQVVSECMGSFGEIQTTQTAPFINTVTGLMNLCAKKLITEVVLLVPVLHLLRNSEVNEAGPGSSMDEQRWTGLENISYQSFRERIRGLPDKRRMILKLIKDNLPMTKDNPKLLKSWLSLVAFEDVSEFVQLTGSFPELLIQSLMCRIIEAEKNTDANRTEKNLEVTGKVLNLLLKSIKKDRERIMKTEQLKLILQCCCNVHKSVCKTARLVPQYKVTVLSFQLLLKMAEIVYDGFFKGGEQMKQHQNEVLSKLNIIQEDFRKWRVELLLKPLMQTTGFTYPREMELWNDLYGIESSIPGVTERWKGFLDHDLRRRISQISDTDKIVVYVLVTSAKAVENSHANIQSCLKELCEAAIKNQCQSKKEGTLLCHLFSKTISWPVLSSIIVESAACFGEDHKGRLLDPQSAINFFLSQDKWNEWKLEDGASQLIAESQSFLGRLIQTLCQGSIPLGHLKTIFKYKTQFQKLYNQYKNNNKEMNVSISVSDLLSQREDDLKAFEQQKGYMTNLINMLGKISDVINVPELSSLEEIAKTNVQEVALDKLVEVETYFSKDDLKKNNTRRVLFYSDDQQVQDMAREMHDVNSSNLILSFWQEKAKDYFMAGPELLSLDLTEIYEDIWTPCLTKFLNFGNRIAVGQACFKEVEEALVGCGETGEGDRLKKEFMLMATMLDGHNENWPEQRLKQIREYRCLYDAAESAEVILKLKDRLGLQGDFSHIHSLTLVRDDSFKQNTLGSLSEDLIKARQKLADVERRHTACLEAFLKSDTLIKWIKAEIPSLKELKVFMELATISAGENDADIDRLASFETAVMGYAPLLYSLPQNVGFEEFFDYAKQVLDTLNKDEKLGDKLVDSNRWLDWLKGLRETHGSVEQSSLSLASAINTGGVYHVGWPDDFNGKTGLDNIFYVKVTKNNEEKTYRLNELLELQNKLMLMSSKGEKGKEQVIKFTQVFEGIQRMGRILLQLHRSGNMLFRNWAAEITCNHQNQPCIQVKFPLLSKCIVYQGEVEEELQKLSRSLEDFHKDWCNHLTKMRSQYYPLNHYSSEQIVYLCEWINSINIKKKPVPQQVWHLLTPIKPDCMLNDIKEAFEIATEPQSILQEDTAEELGPNSDFDLPLSFSLLDVSTECLEDLWKQFKENMSGFLTHHVDVETLGRFLSNLSNMNQLHIKRKIPSFLQEGRPNLVQCPAAELMSTTLSFYMESPENPLPTTDEVLMCQEETTEEEVEIFLRRCLGGAASNHKKIYTLVNPGSMSYDVSVALVEYFETQEVCAGPYYRLVMVCPVNQDRYIPSFFSNYKVQTGITISAERSQKYIRHHFKISYELATHSSVYPERLSVWMIASKRPAVGKSLYVRRLFEKFKGEFPRATLLTIRLIDPYIDMDGFVQTLSERLAPLRQQDPVLLHIDVAAVCHGLEEFLFKLLILECISDSKGTIWRRNKAHLVVIETLQRGHKTQTKMEPSHGFLNTLPTIFCRPPKDIKEIMKTNESFRSLDPLMDKEEFESEDIQRPYQYLRRFNRSMNLDRFTYQAHSVEGDPVDCLHHLLSNYGLKDPSWAELKHFTWFLNLQLKDCEKSLFCDSDFCGETLSGFKDFIVKFMIHMARDFASPSIDISDQSPSFFSKNEDEEEILSFRKRWENESHPYIFFNADHVSMSFLGFHVKQNGTILNAVDSKSGKVLMRNVMTQELFSDIQRQMINLSKDFDDLTREDKLQKMSFVVGAEKGCEKGKFDPDPTYELTTDNVMKMLAIHMRFRCEIPVIIMGETGCGKTRLVRFLCDLQREGRDVENMKLVKVHGGTTSETIYKKVREAEELAQKNRQKYKLDTVLFFDEANTTEAIFAIKEVLCDKTVKGYPLKKNSGLKIIAACNPYRRHTTKMVDRLERAGLGYRVKAEETEDRLGKVPMRQLVYRVHPLPPSMVPLVWDFGQLSDSTELSYIRQIVKKKMRDHRLPLSCQNVITNVLAASQKYMRNQADECSFVSLRDVERSMGVLLWFYNHRDIFFPSQDFPRFENVQMVLKCLVLAVGVCYYPSLENKRPYLATISKCFPDQFNSEESLEQEIASCQDFLLKNIQTRETIAKNMALKENVFLMVVCIELRIPLFLVGKPGSSKSLAKTVIADAMQRQASHCDLFKKLKEVHMVSFQCSPHSSPEGIIGTFRNCARFQKDKNLDEYVSVVVLDEIGLAEDSPQMPLKTLHPLLEDGCIDSDNPESYMKVGFVGISNWALDPAKMNRGIFVSRWDPSEKDLVETAEGICSSSQPVLLKIKHLLSKLAKCFLSICKTDSEQFFGLRDYYGLIKMLFDTVKCSDQEPSDKELAEAVLRNFSGQRDGFDPLDYFKDIFQNIQNVQRPNTLNMIEQNLDHHIDKECRYLLLLTTNNAALYIIQHHIFSKENYTQKCPEIVFGSGFPKDQEYAQICRNVSRIKACMETGRTVILLNLLNLYESLYDALNQYYVYFSGQQYVDLGLGSHRVKCRVHRDFRLVVVEDQEKVYKKFPVPLKNRLEKHKVDRSTDLAPWQHRVLEKLKKWAREFSKIQHSDSSEANFSVTDAFVGFHGDACASALLQALKKIDKLHHNKEENREESEAHHIDREFTEFQEKVNKFPDEAQEDDASMEVDKVQDAEIDEEMETLEDDSDLVKMVEGPVFVETRDKIESNKTMDEEEVYEIAKSFLLNCSTPDSVLRLKYSEFGNQETEELQKMYFHLQTHQSLRDLLNNHLNKTNQDKNRFLEVTTFSNLLTGADVRNLGPALGLSTERFLLLSLHQFDTEASFCNKIQSFLRESGPSVHILLIQMDMEESLCKNELIASAKYCTMNEILHLKSDECNIYTVFITKLSRIGEQCTSITGDKYIGFQGGVWLSAHIDDLRDSDDLCLNLKAFCGIPISQLISQTIESDVKESDEMNTNRQQSEKGDSVHLHSLSLLRSCTQKAVSLLRDTDEKTSRSMERMNILLGLLACDPGRTGARFQQVLLKRLVFALIQKEELIPNAKDWVYKVAKNHEALQECGTLRHTLWRYLQDFLTPVLARILEVIDRDCNLYQLYGEGLSEGLTQFWLDIFEDQQLLDLIPSQNTRAPDQEINVQCHLFVGEVEQPCAAPYSWLIKTYCQSLWEESEFVRSSEQDIKARIQQFVSAVSGSRLGSYIQKLSDVENVELGQRYLTDYVLLAFKVNSEDEHWVLQSAVLGCVFTLQTMMSVSPELSPSWIHAAAQIYNPRMDTLSHVLQLNPQLVSLIQQERPKRESPDMCEDILAVGICVEETKLLPVTSLTECLTFLQRVEQLQPCIERVLSPDYSALCSPGCLKYLETIQSVWQGILLVAVFIEKVVIKMKKGDERIIALTLKHCSQLHGLVEGSPDFRSKDNLQQIIRILNDYHEESISSELRYGVKCRVCLMELSEPFALPCEHVFCRSCLRRSMEREEAQHCPVCREPLSNNYQPTVSTTLNYSFALKQHKEIIKCCNTFFLEVVSRFCLTDDQDPPDDLVELLFSLLISAQGDVYKTRELTPFLECVDQSPVVRSVLPKLLMQYSLKQVKKHIQSYLEDLENKLLDKEDRTELYRLFVNCFQDTLLCSDSNGDHKHLRENTNFLSRLARKQTPSRQNDPAEFLMSMARLRMCLDSAAYILSKAICQKNNFVEAEFKFMEQVKAVCDYCDNDWYRVYLLRALNRQAGMDFLQALINSTDYEWIFPAEMMRLHRLIPAEVDRFLCCGQSYRALRDGVGESTQVGTTDGLKEALQASVGSSPLKNALLTLAVFRQVTCHFMSPERTLHPQEQQISILEKVIRDNMSGHAREFCTALLSNHIGGPGSNLRLGTGVPAQRRPVLELLVHACTVFYSGNRLISPLFNIASQPQNMTGAFLPTMPDDHTSEAKQWLSEKKLKMYFCSNSHACFVGECGRPMAKSKCATCGVEIGGEGHIPVPGFTEAYGDYDRTRPGHILGQARTRSEAPNRKLTLAQSCVLRLCLHLAMLQGLIHYQQGIRNMIHPEVSDVYQFLWQHLEKDMEVLGKTLTLNIDDSAIVIHLIFSRFLQTTPVANVDLSTRKSREQWEITVCKTAISPVLQNLDRELNNAQDLIAADNRLSNSPLVKVLRGDPQRMLQLPANCPTEHSAFWSPSSVLAVESISQQIDQAQAPLLTLFVQKVHYIRQLDCLPALAALLSDLIKVLPPGSETQNHTIASLLHCIPAGHQKKLMSERVEIYMKVWNQLRMEISSNASLGLDSTHCEKDITSESSGQFLFPSRKGAGSCLHAVIDVLSETHNSLVREARKLCQQTDSDYKVPLAVLSKSQLALCHPEREFLPLVLANCHYTLEKGQQTVSSYDHQGIERELSRRFFAGKPRIQTDTEKYLRRHHQNFTEVLNEVRAKIPQEMFWNPKQIHQAFSTNYHSTNRHKGLSRFYPDQPLSITTVPDLVIPRRPVGFQTQERHTLTPPGSHLTALNSLPAFSFCAPPISIRSTMELHLEEKDITSFPGLDSLPEELTWAKAAEIWRLAVQFKH.

The segment covering 1–12 has biased composition (basic residues); sequence MTRKRKSGKKGK. The segment at 1-334 is disordered; the sequence is MTRKRKSGKK…QRKPSPVRAP (334 aa). Composition is skewed to polar residues over residues 24–52 and 75–87; these read GGST…TQKD and SDGS…TNKE. The segment covering 100–110 has biased composition (basic residues); sequence LQKKGPQKRKG. Composition is skewed to polar residues over residues 127–163 and 172–200; these read QTSY…TSAS and TETV…QPPQ. 2 stretches are compositionally biased toward basic and acidic residues: residues 217 to 229 and 236 to 289; these read KGSE…EESV and LSEI…EEPK. Residues 292–301 show a composition bias toward low complexity; that stretch reads AAAAATGKTG. A compositionally biased stretch (polar residues) spans 306 to 322; it reads EQTNQIEANQDSTMESK. ATP contacts are provided by residues 1923-1928, E2023, D2074, K2417, and S2492; that span reads AVGKSL. Residues C3957, C3960, C3972, H3974, C3977, C3980, C3993, C3996, C4451, and H4455 each coordinate Zn(2+). The RING-type zinc-finger motif lies at 3957–3997; the sequence is CRVCLMELSEPFALPCEHVFCRSCLRRSMEREEAQHCPVCR. The segment at 4429–4501 adopts an RZ-type zinc-finger fold; sequence MPDDHTSEAK…AYGDYDRTRP (73 aa). The active-site Nucleophile; for E3 ubiquitin-lipopolysaccharide ligase activity is C4462. Positions 4471 and 4474 each coordinate Zn(2+).

Belongs to the AAA ATPase family.

It is found in the cytoplasm. It localises to the cytosol. The protein localises to the lipid droplet. It carries out the reaction S-ubiquitinyl-[E2 ubiquitin-conjugating enzyme]-L-cysteine + [acceptor protein]-L-lysine = [E2 ubiquitin-conjugating enzyme]-L-cysteine + N(6)-ubiquitinyl-[acceptor protein]-L-lysine.. It catalyses the reaction ATP + H2O = ADP + phosphate + H(+). It participates in protein modification; protein ubiquitination. In terms of biological role, atypical E3 ubiquitin ligase that can catalyze ubiquitination of both proteins and lipids, and which is involved in various processes, such as lipid metabolism, angiogenesis and cell-autonomous immunity. Acts as a key immune sensor by catalyzing ubiquitination of the lipid A moiety of bacterial lipopolysaccharide (LPS) via its RZ-type zinc-finger: restricts the proliferation of cytosolic bacteria, such as Salmonella, by generating the bacterial ubiquitin coat through the ubiquitination of LPS. Ubiquitination of LPS triggers cell-autonomous immunity, such as antibacterial autophagy, leading to degradation of the microbial invader. Involved in lipid metabolism by regulating fat storage and lipid droplet formation; act by inhibiting the lipolytic process. Also regulates lipotoxicity by inhibiting desaturation of fatty acids. Also acts as an E3 ubiquitin-protein ligase via its RING-type zinc finger. Involved in the non-canonical Wnt signaling pathway in vascular development: acts by mediating ubiquitination and degradation of proteins downstream of rspo3, leading to inhibit the non-canonical Wnt signaling pathway and promoting vessel regression. Also has ATPase activity; ATPase activity is required for ubiquitination of LPS. The polypeptide is E3 ubiquitin-protein ligase rnf213-beta (rnf213b) (Danio rerio (Zebrafish)).